The chain runs to 331 residues: Geranylgeranyl transferase type-2 subunit beta (331 aa).

Gly2 is modified (N-acetylglycine). Position 3 is a phosphothreonine (Thr3). PFTB repeat units lie at residues 20–61 (LEKH…DLMG), 68–109 (REEI…TLYD), 116–157 (VNKV…ALLG), 164–205 (VEKA…AITS), 212–253 (SDLL…KIIG), and 260–302 (REKL…SLLG). 190–192 (HAG) lines the geranylgeranyl diphosphate pocket. Zn(2+) is bound by residues Asp238 and Cys240. 241-244 (YSWW) contributes to the geranylgeranyl diphosphate binding site. Position 290 (His290) interacts with Zn(2+).

The protein belongs to the protein prenyltransferase subunit beta family. Heterotrimer composed of RABGGTA, RABGGTB and CHM; within this trimer, RABGGTA and RABGGTB form the catalytic component B, while CHM (component A) mediates peptide substrate binding. The Rab GGTase dimer (RGGT) interacts with CHM (component A) prior to Rab protein binding; the association is stabilized by geranylgeranyl pyrophosphate (GGpp). The CHM:RGGT:Rab complex is destabilized by GGpp. Interaction of RABGGTB with prenylated PTP4A2 precludes its association with RABGGTA and inhibits enzyme activity. Interacts with CHODL. Interacts with non-phosphorylated form of RAB8A; phosphorylation of RAB8A at 'Thr-72' disrupts this interaction. Zn(2+) serves as cofactor.

The catalysed reaction is geranylgeranyl diphosphate + L-cysteinyl-[protein] = S-geranylgeranyl-L-cysteinyl-[protein] + diphosphate. The enzymatic reaction requires the aid of a Rab escort protein (also called component A). Its function is as follows. Catalyzes the transfer of a geranylgeranyl moiety from geranylgeranyl diphosphate to both cysteines of Rab proteins with the C-terminal sequence -XXCC, -XCXC and -CCXX, such as RAB1A, RAB3A, RAB5A and RAB7A. In Homo sapiens (Human), this protein is Geranylgeranyl transferase type-2 subunit beta (RABGGTB).